We begin with the raw amino-acid sequence, 339 residues long: DNA-directed RNA polymerase subunit alpha (339 aa).

An alpha N-terminal domain (alpha-NTD) region spans residues 1-234 (MIEKNWQELI…DQFQIFINFE (234 aa)). Residues 251 to 339 (FNPALLRKVD…DLAKRFEDHV (89 aa)) are alpha C-terminal domain (alpha-CTD).

This sequence belongs to the RNA polymerase alpha chain family. As to quaternary structure, homodimer. The RNAP catalytic core consists of 2 alpha, 1 beta, 1 beta' and 1 omega subunit. When a sigma factor is associated with the core the holoenzyme is formed, which can initiate transcription.

The enzyme catalyses RNA(n) + a ribonucleoside 5'-triphosphate = RNA(n+1) + diphosphate. Its function is as follows. DNA-dependent RNA polymerase catalyzes the transcription of DNA into RNA using the four ribonucleoside triphosphates as substrates. This Maricaulis maris (strain MCS10) (Caulobacter maris) protein is DNA-directed RNA polymerase subunit alpha.